A 309-amino-acid polypeptide reads, in one-letter code: MVKVYAPASSANMSVGFDVLGAAVTPVDGTLLGDNVTVEAAEQFSLQNLGRFASKLPTAPQENIVYQCWESFCREIGKTVPVAMTLEKNMPIGSGLGSSACSVVAALVAMNEFCGKPLNETRMLALMGEMEGRISGSIHYDNVAPCYLGGMQLMIEENGIISQQVPGFDEWLWVLAYPGIKVSTAEARAILPAQYRRQDCIAHGRHLAGFIHACYTRQPQLAAKLMKDVIAEPYRTKLLPGFSEARQAAMEMGAQACGISGSGPTLFALCDKPDTAQRVADWLGAHYLQNQEGFVHICRLDTAGARVVG.

91-101 (PIGSGLGSSAC) serves as a coordination point for ATP.

Belongs to the GHMP kinase family. Homoserine kinase subfamily.

The protein localises to the cytoplasm. It catalyses the reaction L-homoserine + ATP = O-phospho-L-homoserine + ADP + H(+). The protein operates within amino-acid biosynthesis; L-threonine biosynthesis; L-threonine from L-aspartate: step 4/5. Functionally, catalyzes the ATP-dependent phosphorylation of L-homoserine to L-homoserine phosphate. This Klebsiella pneumoniae subsp. pneumoniae (strain ATCC 700721 / MGH 78578) protein is Homoserine kinase.